The primary structure comprises 245 residues: 1-(5-phosphoribosyl)-5-[(5-phosphoribosylamino)methylideneamino] imidazole-4-carboxamide isomerase (245 aa).

Asp-7 functions as the Proton acceptor in the catalytic mechanism. Residue Asp-129 is the Proton donor of the active site.

It belongs to the HisA/HisF family.

Its subcellular location is the cytoplasm. It carries out the reaction 1-(5-phospho-beta-D-ribosyl)-5-[(5-phospho-beta-D-ribosylamino)methylideneamino]imidazole-4-carboxamide = 5-[(5-phospho-1-deoxy-D-ribulos-1-ylimino)methylamino]-1-(5-phospho-beta-D-ribosyl)imidazole-4-carboxamide. It participates in amino-acid biosynthesis; L-histidine biosynthesis; L-histidine from 5-phospho-alpha-D-ribose 1-diphosphate: step 4/9. In Escherichia coli (strain SMS-3-5 / SECEC), this protein is 1-(5-phosphoribosyl)-5-[(5-phosphoribosylamino)methylideneamino] imidazole-4-carboxamide isomerase.